The following is a 192-amino-acid chain: PBAN-type neuropeptides (192 aa).

Positions 1–23 (MYKTNIVFNVLALALFSIFFASC) are cleaved as a signal peptide. Leucine amide is present on L47. Positions 51 to 94 (SMKPSTEDNRQTFLRLLEAADALKFYYDQLPYERQADEPETKVT) are excised as a propeptide. Leucine amide occurs at positions 103, 122, 158, and 168. Positions 171-192 (ELSYDYPTKYRVARSVNKTMDN) are excised as a propeptide.

This sequence belongs to the pyrokinin family. In terms of tissue distribution, expression is restricted to the subesophageal ganglion.

The protein resides in the secreted. A hormone that controls sex pheromone production in females and pheromone responsiveness in male. Also mediates visceral muscle contractile activity (myotropic activity). Identical to MRCH which is implicated in the formation of both melanin in the cuticle and ommochrome in the epidermis of armyworm species. Its function is as follows. Diapause hormone (DH) is responsible for induction of embryonic diapause. In terms of biological role, the three SGNPS are far less active than DH in inducing diapause eggs. Beta-SGNP expressed higher pban activity than PBAN-I, but alpha- and gamma-SGNP were far less active in pheromonotropic activity. This Bombyx mori (Silk moth) protein is PBAN-type neuropeptides.